Here is a 405-residue protein sequence, read N- to C-terminus: Imidazolonepropionase (405 aa).

2 residues coordinate Fe(3+): His72 and His74. The Zn(2+) site is built by His72 and His74. Positions 81, 144, and 177 each coordinate 4-imidazolone-5-propanoate. Tyr144 contacts N-formimidoyl-L-glutamate. His242 contributes to the Fe(3+) binding site. His242 contributes to the Zn(2+) binding site. Residue Gln245 coordinates 4-imidazolone-5-propanoate. Fe(3+) is bound at residue Asp317. Asp317 contacts Zn(2+). Residues Asn319 and Gly321 each contribute to the N-formimidoyl-L-glutamate site. 4-imidazolone-5-propanoate is bound at residue Thr322.

This sequence belongs to the metallo-dependent hydrolases superfamily. HutI family. The cofactor is Zn(2+). It depends on Fe(3+) as a cofactor.

It is found in the cytoplasm. It carries out the reaction 4-imidazolone-5-propanoate + H2O = N-formimidoyl-L-glutamate. Its pathway is amino-acid degradation; L-histidine degradation into L-glutamate; N-formimidoyl-L-glutamate from L-histidine: step 3/3. Its function is as follows. Catalyzes the hydrolytic cleavage of the carbon-nitrogen bond in imidazolone-5-propanoate to yield N-formimidoyl-L-glutamate. It is the third step in the universal histidine degradation pathway. In Erwinia tasmaniensis (strain DSM 17950 / CFBP 7177 / CIP 109463 / NCPPB 4357 / Et1/99), this protein is Imidazolonepropionase.